The chain runs to 508 residues: Catalase (508 aa).

The signal sequence occupies residues 1–21 (MHMSKSFLLISMGLASISVHA). Active-site residues include histidine 72 and asparagine 145. Position 353 (tyrosine 353) interacts with heme. Residues 373-392 (PKSPVANHNQDGPSNNSTGL) show a composition bias toward polar residues. Residues 373-396 (PKSPVANHNQDGPSNNSTGLGNVD) are disordered.

This sequence belongs to the catalase family. It depends on heme as a cofactor.

Its subcellular location is the periplasm. The catalysed reaction is 2 H2O2 = O2 + 2 H2O. Its function is as follows. Decomposes hydrogen peroxide into water and oxygen; serves to protect cells from the toxic effects of hydrogen peroxide. The sequence is that of Catalase from Vibrio vulnificus (strain CMCP6).